A 729-amino-acid chain; its full sequence is Sodium-dependent neutral amino acid transporter B(0)AT2 (729 aa).

Residues 1–69 lie on the Cytoplasmic side of the membrane; it reads MPKNSKVVKR…ERPAWNSKLQ (69 aa). 2 positions are modified to phosphoserine: Ser25 and Ser55. The tract at residues 42–61 is disordered; that stretch reads DVQEEKDTDAEDGSEADDER. Residues 43 to 59 are compositionally biased toward acidic residues; that stretch reads VQEEKDTDAEDGSEADD. Helical transmembrane passes span 70–90, 98–117, and 142–162; these read YILA…FPYL, AYLL…LFFL, and GIGF…NVII. Residues 163-225 are Extracellular-facing; sequence GWTLFYFSQS…SSISDSGGLN (63 aa). The N-linked (GlcNAc...) asparagine glycan is linked to Asn187. Transmembrane regions (helical) follow at residues 226–244 and 253–270; these read WKMT…LAMI and IMYF…CFLI. Asn276 carries an N-linked (GlcNAc...) asparagine glycan. 2 consecutive transmembrane segments (helical) span residues 306–323 and 335–356; these read VFFA…FSSY and VLVS…FAVL. At 357 to 452 the chain is on the extracellular side; the sequence is GFKANIVNEK…FIAFTEAMTH (96 aa). 2 N-linked (GlcNAc...) asparagine glycosylation sites follow: Asn383 and Asn394. The next 5 helical transmembrane spans lie at 453 to 472, 496 to 514, 530 to 550, 571 to 592, and 620 to 642; these read FPAS…NLGL, ILTV…IFVQ, TLPL…VYGI, YMWK…IVNM, and VVCF…IRRC. At 643-729 the chain is on the cytoplasmic side; sequence NLIDDSSGNL…DMPDMPESDL (87 aa). Residues Ser687, Ser699, and Ser701 each carry the phosphoserine modification.

Belongs to the sodium:neurotransmitter symporter (SNF) (TC 2.A.22) family. SLC6A15 subfamily. Significant expressed in brain, lung and kidney. In brain, mainly expressed int the cortex, the cerebellum and the brain stem.

It localises to the membrane. It catalyses the reaction L-pipecolate(in) + Na(+)(in) = L-pipecolate(out) + Na(+)(out). It carries out the reaction L-leucine(in) + Na(+)(in) = L-leucine(out) + Na(+)(out). The catalysed reaction is L-isoleucine(in) + Na(+)(in) = L-isoleucine(out) + Na(+)(out). The enzyme catalyses L-methionine(in) + Na(+)(in) = L-methionine(out) + Na(+)(out). It catalyses the reaction L-proline(in) + Na(+)(in) = L-proline(out) + Na(+)(out). It carries out the reaction L-alanine(in) + Na(+)(in) = L-alanine(out) + Na(+)(out). The catalysed reaction is L-asparagine(in) + Na(+)(in) = L-asparagine(out) + Na(+)(out). The enzyme catalyses L-valine(in) + Na(+)(in) = L-valine(out) + Na(+)(out). It catalyses the reaction L-cysteine(in) + Na(+)(in) = L-cysteine(out) + Na(+)(out). It carries out the reaction L-glutamine(in) + Na(+)(in) = L-glutamine(out) + Na(+)(out). The catalysed reaction is L-serine(in) + Na(+)(in) = L-serine(out) + Na(+)(out). The enzyme catalyses L-threonine(in) + Na(+)(in) = L-threonine(out) + Na(+)(out). It catalyses the reaction L-phenylalanine(in) + Na(+)(in) = L-phenylalanine(out) + Na(+)(out). Its function is as follows. Functions as a sodium-dependent neutral amino acid transporter. Exhibits preference for methionine and for the branched-chain amino acids, particularly leucine, valine and isoleucine. Can also transport low-affinity substrates such as alanine, phenylalanine, glutamine and pipecolic acid. Mediates the saturable, pH-sensitive and electrogenic cotransport of proline and sodium ions with a stoichiometry of 1:1. May have a role as transporter for neurotransmitter precursors into neurons. In contrast to other members of the neurotransmitter transporter family, does not appear to be chloride-dependent. This chain is Sodium-dependent neutral amino acid transporter B(0)AT2 (Slc6a15), found in Mus musculus (Mouse).